A 1496-amino-acid polypeptide reads, in one-letter code: Chromosome partition protein MukB (1496 aa).

63–70 lines the ATP pocket; it reads GGNGAGKS. 2 coiled-coil regions span residues 328 to 493 and 536 to 632; these read KLEL…QRLS and KMQA…APAW. The tract at residues 694 to 811 is flexible hinge; it reads PDGSDDVRLN…EVPLFGRAAR (118 aa). 2 coiled-coil regions span residues 861–1171 and 1235–1291; these read NPEE…SAEE and IDAI…LQNI. Over residues 1082-1091 the composition is skewed to basic and acidic residues; sequence RARSRRDELQ. The segment at 1082–1101 is disordered; that stretch reads RARSRRDELQQRLSQQRSRK.

It belongs to the SMC family. MukB subfamily. In terms of assembly, homodimerization via its hinge domain. Binds to DNA via its C-terminal region. Interacts, and probably forms a ternary complex, with MukE and MukF via its C-terminal region. The complex formation is stimulated by calcium or magnesium. Interacts with tubulin-related protein FtsZ.

It is found in the cytoplasm. It localises to the nucleoid. Its function is as follows. Plays a central role in chromosome condensation, segregation and cell cycle progression. Functions as a homodimer, which is essential for chromosome partition. Involved in negative DNA supercoiling in vivo, and by this means organize and compact chromosomes. May achieve or facilitate chromosome segregation by condensation DNA from both sides of a centrally located replisome during cell division. The sequence is that of Chromosome partition protein MukB from Actinobacillus pleuropneumoniae serotype 3 (strain JL03).